The primary structure comprises 64 residues: Large ribosomal subunit protein uL29 (64 aa).

Belongs to the universal ribosomal protein uL29 family.

This chain is Large ribosomal subunit protein uL29, found in Teredinibacter turnerae (strain ATCC 39867 / T7901).